An 88-amino-acid chain; its full sequence is Small ribosomal subunit protein bS20 (88 aa).

This sequence belongs to the bacterial ribosomal protein bS20 family.

Binds directly to 16S ribosomal RNA. In Blochmanniella floridana, this protein is Small ribosomal subunit protein bS20.